We begin with the raw amino-acid sequence, 170 residues long: dCTP pyrophosphatase 1 (170 aa).

Residues 1–25 (MSQAGTGVCGNGGQEDSAAAGPFSF) are disordered. Serine 2 is modified (N-acetylserine). Serine 2 bears the Phosphoserine mark. Substrate-binding positions include histidine 38 and 47–51 (WEQFH). The Mg(2+) site is built by glutamate 63 and glutamate 66. Tryptophan 73 serves as a coordination point for substrate. Mg(2+) contacts are provided by glutamate 95 and aspartate 98. Residue tyrosine 102 participates in substrate binding. The segment at 149–170 (LSENEAVGSGDPASELGNQAST) is disordered.

Homotetramer. Mg(2+) serves as cofactor.

It is found in the cytoplasm. Its subcellular location is the cytosol. It carries out the reaction dCTP + H2O = dCMP + diphosphate + H(+). Hydrolyzes deoxynucleoside triphosphates (dNTPs) to the corresponding nucleoside monophosphates. Has a strong preference for dCTP and its analogs including 5-iodo-dCTP and 5-methyl-dCTP for which it may even have a higher efficiency. May protect DNA or RNA against the incorporation of these genotoxic nucleotide analogs through their catabolism. The polypeptide is dCTP pyrophosphatase 1 (Rattus norvegicus (Rat)).